An 88-amino-acid chain; its full sequence is Large ribosomal subunit protein bL27 (88 aa).

The segment at 1–21 (MAHKKGTGSTRNGRDSRAQRL) is disordered.

It belongs to the bacterial ribosomal protein bL27 family.

In Picosynechococcus sp. (strain ATCC 27264 / PCC 7002 / PR-6) (Agmenellum quadruplicatum), this protein is Large ribosomal subunit protein bL27.